The sequence spans 193 residues: Putative nucleotidase YqfW (193 aa).

Belongs to the 5'(3')-deoxyribonucleotidase family.

The protein is Putative nucleotidase YqfW (yqfW) of Bacillus subtilis (strain 168).